The sequence spans 88 residues: Protein WIR1A (88 aa).

Residues 1 to 13 (MASLGSSAGGRRP) lie on the Cytoplasmic side of the membrane. Residues 14–35 (TVLLQIALFVVVAAIIINSSVC) traverse the membrane as a helical segment. The Extracellular segment spans residues 36–88 (LGATAVHDAAASGTGALDPNVPAVPTPGGAGQPYTGRGCRTVYGCRPPAGGQP).

The protein localises to the membrane. In terms of biological role, associated with pathogen defense. This Triticum aestivum (Wheat) protein is Protein WIR1A (WIR1A).